A 298-amino-acid polypeptide reads, in one-letter code: Beta-soluble NSF attachment protein (298 aa).

The protein belongs to the SNAP family. As to quaternary structure, interacts with PRKCABP, and disrupts the interaction between GRIA2 and PRKCABP, leading to the internalization of GRIA2. Brain.

The protein resides in the membrane. Functionally, required for vesicular transport between the endoplasmic reticulum and the Golgi apparatus. The sequence is that of Beta-soluble NSF attachment protein (NAPB) from Bos taurus (Bovine).